We begin with the raw amino-acid sequence, 340 residues long: Fructose-bisphosphate aldolase (340 aa).

S53 contributes to the D-glyceraldehyde 3-phosphate binding site. Residue D95 is the Proton donor of the active site. Zn(2+) is bound by residues H96, D131, E161, and H212. A dihydroxyacetone phosphate-binding site is contributed by G213. Residue H249 coordinates Zn(2+). Dihydroxyacetone phosphate-binding positions include 250–252 (GGS) and 271–274 (NLDT).

It belongs to the class II fructose-bisphosphate aldolase family. Requires Zn(2+) as cofactor.

The enzyme catalyses beta-D-fructose 1,6-bisphosphate = D-glyceraldehyde 3-phosphate + dihydroxyacetone phosphate. It functions in the pathway carbohydrate degradation; glycolysis; D-glyceraldehyde 3-phosphate and glycerone phosphate from D-glucose: step 4/4. Functionally, catalyzes the aldol condensation of dihydroxyacetone phosphate (DHAP or glycerone-phosphate) with glyceraldehyde 3-phosphate (G3P) to form fructose 1,6-bisphosphate (FBP) in gluconeogenesis and the reverse reaction in glycolysis. The sequence is that of Fructose-bisphosphate aldolase (fba) from Streptomyces galbus.